Reading from the N-terminus, the 129-residue chain is Small ribosomal subunit protein uS11 (129 aa).

This sequence belongs to the universal ribosomal protein uS11 family. In terms of assembly, part of the 30S ribosomal subunit. Interacts with proteins S7 and S18. Binds to IF-3.

Its function is as follows. Located on the platform of the 30S subunit, it bridges several disparate RNA helices of the 16S rRNA. Forms part of the Shine-Dalgarno cleft in the 70S ribosome. The chain is Small ribosomal subunit protein uS11 from Geobacillus thermodenitrificans (strain NG80-2).